We begin with the raw amino-acid sequence, 183 residues long: GTP cyclohydrolase 1 (183 aa).

Cys71, His74, and Cys142 together coordinate Zn(2+).

The protein belongs to the GTP cyclohydrolase I family. Toroid-shaped homodecamer, composed of two pentamers of five dimers.

It catalyses the reaction GTP + H2O = 7,8-dihydroneopterin 3'-triphosphate + formate + H(+). The protein operates within cofactor biosynthesis; 7,8-dihydroneopterin triphosphate biosynthesis; 7,8-dihydroneopterin triphosphate from GTP: step 1/1. This Leptospira borgpetersenii serovar Hardjo-bovis (strain JB197) protein is GTP cyclohydrolase 1.